A 344-amino-acid chain; its full sequence is L-rhamnose-proton symporter (344 aa).

A run of 10 helical transmembrane segments spans residues 4–24 (AITM…CFYA), 38–58 (WSVG…ATLL), 72–92 (TLLP…NYGL), 101–121 (MGIG…TPII), 131–151 (TQGG…VGIV), 175–195 (LLLA…MNAA), 214–234 (LPSY…FCFI), 259–279 (LLLS…YAWG), 290–310 (MSWM…GLVL), and 323–343 (VLSL…LGMA).

The protein belongs to the L-rhamnose transporter (TC 2.A.7.6) family.

The protein resides in the cell inner membrane. It catalyses the reaction L-rhamnopyranose(in) + H(+)(in) = L-rhamnopyranose(out) + H(+)(out). Uptake of L-rhamnose across the cytoplasmic membrane with the concomitant transport of protons into the cell (symport system). This is L-rhamnose-proton symporter from Klebsiella pneumoniae (strain 342).